The chain runs to 139 residues: Large ribosomal subunit protein bL9m (139 aa).

The segment at 83–121 (DHQQLSKRHETEVQKNMELRKESVFGHKKEEKPKEEKKG) is disordered.

The protein belongs to the bacterial ribosomal protein bL9 family. As to quaternary structure, component of the mitochondrial large ribosomal subunit (mt-LSU). Mature yeast 74S mitochondrial ribosomes consist of a small (37S) and a large (54S) subunit. The 37S small subunit contains a 15S ribosomal RNA (15S mt-rRNA) and 34 different proteins. The 54S large subunit contains a 21S rRNA (21S mt-rRNA) and 46 different proteins.

Its subcellular location is the mitochondrion. In terms of biological role, component of the mitochondrial ribosome (mitoribosome), a dedicated translation machinery responsible for the synthesis of mitochondrial genome-encoded proteins, including at least some of the essential transmembrane subunits of the mitochondrial respiratory chain. The mitoribosomes are attached to the mitochondrial inner membrane and translation products are cotranslationally integrated into the membrane. The protein is Large ribosomal subunit protein bL9m (MRPL50) of Saccharomyces cerevisiae (strain ATCC 204508 / S288c) (Baker's yeast).